Here is a 188-residue protein sequence, read N- to C-terminus: Holliday junction branch migration complex subunit RuvA (188 aa).

The tract at residues 1 to 62 (MIVGVRGVLV…EDAQLLYGFL (62 aa)) is domain I. The domain II stretch occupies residues 63 to 135 (ELGEKKLFER…LSGFDTELII (73 aa)). The interval 135-139 (ISASE) is flexible linker. Positions 140 to 188 (PKSLAVAQASEALESLGFKKDKISKALGSCSAVDTAILVKEALKLLQTI) are domain III.

Belongs to the RuvA family. Homotetramer. Forms an RuvA(8)-RuvB(12)-Holliday junction (HJ) complex. HJ DNA is sandwiched between 2 RuvA tetramers; dsDNA enters through RuvA and exits via RuvB. An RuvB hexamer assembles on each DNA strand where it exits the tetramer. Each RuvB hexamer is contacted by two RuvA subunits (via domain III) on 2 adjacent RuvB subunits; this complex drives branch migration. In the full resolvosome a probable DNA-RuvA(4)-RuvB(12)-RuvC(2) complex forms which resolves the HJ.

The protein localises to the cytoplasm. Its function is as follows. The RuvA-RuvB-RuvC complex processes Holliday junction (HJ) DNA during genetic recombination and DNA repair, while the RuvA-RuvB complex plays an important role in the rescue of blocked DNA replication forks via replication fork reversal (RFR). RuvA specifically binds to HJ cruciform DNA, conferring on it an open structure. The RuvB hexamer acts as an ATP-dependent pump, pulling dsDNA into and through the RuvAB complex. HJ branch migration allows RuvC to scan DNA until it finds its consensus sequence, where it cleaves and resolves the cruciform DNA. This is Holliday junction branch migration complex subunit RuvA from Sulfurimonas denitrificans (strain ATCC 33889 / DSM 1251) (Thiomicrospira denitrificans (strain ATCC 33889 / DSM 1251)).